Here is a 235-residue protein sequence, read N- to C-terminus: 2-C-methyl-D-erythritol 4-phosphate cytidylyltransferase (235 aa).

The protein belongs to the IspD/TarI cytidylyltransferase family. IspD subfamily.

The enzyme catalyses 2-C-methyl-D-erythritol 4-phosphate + CTP + H(+) = 4-CDP-2-C-methyl-D-erythritol + diphosphate. Its pathway is isoprenoid biosynthesis; isopentenyl diphosphate biosynthesis via DXP pathway; isopentenyl diphosphate from 1-deoxy-D-xylulose 5-phosphate: step 2/6. In terms of biological role, catalyzes the formation of 4-diphosphocytidyl-2-C-methyl-D-erythritol from CTP and 2-C-methyl-D-erythritol 4-phosphate (MEP). The sequence is that of 2-C-methyl-D-erythritol 4-phosphate cytidylyltransferase from Pseudomonas entomophila (strain L48).